The sequence spans 230 residues: Protein GrpE (230 aa).

Disordered regions lie at residues 1 to 26 (MADE…DREA) and 209 to 230 (GVSK…EDNA). Residues 221–230 (NGASTSEDNA) show a composition bias toward polar residues.

It belongs to the GrpE family. In terms of assembly, homodimer.

The protein resides in the cytoplasm. Participates actively in the response to hyperosmotic and heat shock by preventing the aggregation of stress-denatured proteins, in association with DnaK and GrpE. It is the nucleotide exchange factor for DnaK and may function as a thermosensor. Unfolded proteins bind initially to DnaJ; upon interaction with the DnaJ-bound protein, DnaK hydrolyzes its bound ATP, resulting in the formation of a stable complex. GrpE releases ADP from DnaK; ATP binding to DnaK triggers the release of the substrate protein, thus completing the reaction cycle. Several rounds of ATP-dependent interactions between DnaJ, DnaK and GrpE are required for fully efficient folding. This chain is Protein GrpE, found in Brucella suis biovar 1 (strain 1330).